A 545-amino-acid chain; its full sequence is Glutamine-dependent NAD(+) synthetase (545 aa).

The CN hydrolase domain maps to Leu5 to Arg247. Glu46 acts as the Proton acceptor; for glutaminase activity in catalysis. Lys113 functions as the For glutaminase activity in the catalytic mechanism. Tyr119 is a binding site for L-glutamine. The Nucleophile; for glutaminase activity role is filled by Cys151. 2 residues coordinate L-glutamine: Ser177 and Lys183. A ligase region spans residues Val269–Gly545. Gly292 to Ser299 is an ATP binding site. Asn375 provides a ligand contact to deamido-NAD(+). Position 399 (Thr399) interacts with ATP. Positions 404 and 516 each coordinate deamido-NAD(+).

The protein in the C-terminal section; belongs to the NAD synthetase family.

The enzyme catalyses deamido-NAD(+) + L-glutamine + ATP + H2O = L-glutamate + AMP + diphosphate + NAD(+) + H(+). It participates in cofactor biosynthesis; NAD(+) biosynthesis; NAD(+) from deamido-NAD(+) (L-Gln route): step 1/1. Its function is as follows. Catalyzes the ATP-dependent amidation of deamido-NAD to form NAD. Uses L-glutamine as a nitrogen source. The polypeptide is Glutamine-dependent NAD(+) synthetase (Xylella fastidiosa (strain 9a5c)).